A 238-amino-acid chain; its full sequence is 5'-deoxynucleotidase YBR242W (238 aa).

One can recognise an HD domain in the interval 77–183; that stretch reads ISDHMYRLSI…VKDIDKYEML (107 aa). A divalent metal cation contacts are provided by histidine 80, histidine 108, aspartate 109, glutamate 112, aspartate 117, isoleucine 118, and aspartate 178.

It belongs to the HDDC2 family. Homodimer. Mn(2+) serves as cofactor. Co(2+) is required as a cofactor. Requires Mg(2+) as cofactor.

The enzyme catalyses a 2'-deoxyribonucleoside 5'-phosphate + H2O = a 2'-deoxyribonucleoside + phosphate. Functionally, catalyzes the dephosphorylation of the nucleoside 5'-monophosphates deoxyadenosine monophosphate (dAMP), deoxycytidine monophosphate (dCMP), deoxyguanosine monophosphate (dGMP) and deoxythymidine monophosphate (dTMP). This is 5'-deoxynucleotidase YBR242W from Saccharomyces cerevisiae (strain ATCC 204508 / S288c) (Baker's yeast).